The following is a 335-amino-acid chain: Prepilin leader peptidase/N-methyltransferase (335 aa).

A helical membrane pass occupies residues 13–33 (LFAVFLFVLGLCVGSFLNVVI). Zn(2+)-binding residues include cysteine 49, cysteine 52, cysteine 74, and cysteine 77. A run of 5 helical transmembrane segments spans residues 105–125 (WTYELVPALVLVSLLVPLAFI), 131–151 (ILPLSMTVPGMLAGIALAFPL), 206–226 (LLGVLLFASMQGAVVGILMLL), 258–278 (PGLPLWKRLLLVPVCLLVQPI), and 299–319 (IPFGPWLALAGLELLLLGPWL).

It belongs to the peptidase A24 family. It depends on Zn(2+) as a cofactor.

It is found in the cell inner membrane. It catalyses the reaction Typically cleaves a -Gly-|-Phe- bond to release an N-terminal, basic peptide of 5-8 residues from type IV prepilin, and then N-methylates the new N-terminal amino group, the methyl donor being S-adenosyl-L-methionine.. In terms of biological role, plays an essential role in type IV pili and type II pseudopili formation by proteolytically removing the leader sequence from substrate proteins and subsequently monomethylating the alpha-amino group of the newly exposed N-terminal phenylalanine. The polypeptide is Prepilin leader peptidase/N-methyltransferase (pilD) (Myxococcus xanthus (strain DK1622)).